Here is a 281-residue protein sequence, read N- to C-terminus: Putative thiosulfate sulfurtransferase (281 aa).

2 Rhodanese domains span residues 18–125 (NTDG…ELTK) and 154–274 (AIGN…VPIE). Catalysis depends on cysteine 233, which acts as the Cysteine persulfide intermediate. Residue arginine 238 coordinates substrate.

It carries out the reaction thiosulfate + hydrogen cyanide = thiocyanate + sulfite + 2 H(+). May be a sulfotransferase involved in the formation of thiosulfate. The protein is Putative thiosulfate sulfurtransferase (cysA) of Saccharopolyspora erythraea (Streptomyces erythraeus).